The sequence spans 683 residues: Cytochrome P450 monooxygenase htyF (683 aa).

A helical transmembrane segment spans residues 8-28; it reads PALLAASVVLAVSLVSYVIQL. N29 carries N-linked (GlcNAc...) asparagine glycosylation. C481 contributes to the heme binding site. N581 carries N-linked (GlcNAc...) asparagine glycosylation. Residues 588–608 form a helical membrane-spanning segment; sequence LYVFVVLVACVAALFIGIGIY.

The protein belongs to the cytochrome P450 family. Heme serves as cofactor.

It is found in the membrane. It functions in the pathway antifungal biosynthesis. Cytochrome P450 monooxygenase; part of the gene cluster that mediates the de novo generation of L-homotyrosine from acetyl-CoA and 4-hydroxyphenyl-pyruvate. L-homotyrosine is a building block of echinocandin B, a fungal lipidated cyclic hexapeptide that acts as an antifungal agent. L-homotyrosine 4-hydroxyphenyl-pyruvate first undergoes an aldol-type condensation by htyA with the C-2 of acetyl-CoA followed by the release of CoA to form 2-(4-hydroxybenzyl)-malate. This is followed by isomerization of 2-(4-hydroxy-benzyl)-malate to 3-(4-hydroxybenzyl)-malate by htyD. Thereafter, 3-(4-hydroxybenzyl)-malate undergoes decarboxylation and oxidation to form 2-oxo-4-(4-hydroxybenzyl)butanoic acid, coupled to reduction of NAD(+) to NADH by htyC. The product then undergoes transamination catalyzed by htyB to form L-homotyrosine. The chain is Cytochrome P450 monooxygenase htyF from Aspergillus rugulosus (Emericella rugulosa).